The following is a 200-amino-acid chain: Small ribosomal subunit protein uS4 (200 aa).

The segment at Thr22–Lys42 is disordered. The region spanning Ala92 to Lys152 is the S4 RNA-binding domain.

It belongs to the universal ribosomal protein uS4 family. As to quaternary structure, part of the 30S ribosomal subunit. Contacts protein S5. The interaction surface between S4 and S5 is involved in control of translational fidelity.

Its function is as follows. One of the primary rRNA binding proteins, it binds directly to 16S rRNA where it nucleates assembly of the body of the 30S subunit. With S5 and S12 plays an important role in translational accuracy. This is Small ribosomal subunit protein uS4 from Bacillus cereus (strain B4264).